The sequence spans 295 residues: G1/S-specific cyclin-D1 (295 aa).

The Cyclin N-terminal domain occupies L28–L152. Residues A262–L283 are disordered. K269 participates in a covalent cross-link: Glycyl lysine isopeptide (Lys-Gly) (interchain with G-Cter in ubiquitin). T286 bears the Phosphothreonine mark.

Belongs to the cyclin family. Cyclin D subfamily. In terms of assembly, interacts with either CDK4 or CDK6 protein kinase to form a serine/threonine kinase holoenzyme complex. The cyclin subunit imparts substrate specificity to the complex. Component of the ternary complex CCND1/CDK4/CDKN1B required for nuclear translocation and modulation of CDK4-mediated kinase activity. Interacts directly with CDKN1B. Can form similar complexes with either CDKN1A or CDKN2A. Interacts with UHRF2; the interaction ubiquitinates CCND1 and appears to occur independently of phosphorylation. Interacts with USP2. Interacts (via cyclin N-terminal domain) with INSM1 (via N-terminal region); the interaction competes with the binding of CCND1 to CDK4 during cell cycle progression and inhibits CDK4 activity. Interacts with CDK4; the interaction is prevented with the binding of CCND1 to INSM1 during cell cycle progression. Post-translationally, phosphorylation at Thr-286 by MAP kinases is required for ubiquitination and degradation by the DCX(AMBRA1) complex. It also plays an essential role for recognition by the FBXO31 component of SCF (SKP1-cullin-F-box) protein ligase complex following DNA damage. Ubiquitinated at Lys-269 by the DCX(AMBRA1) complex during the transition from G1 to S cell phase, leading to its degradation: ubiquitination is dependent on Thr-286 phosphorylation. The DCX(AMBRA1) complex represents the major regulator of CCND1 stability during the G1/S transition. Also ubiquitinated by the SCF(FBXO4) and Cul7-RING(FBXW8) ubiquitin-protein ligase complexes. Following DNA damage it is ubiquitinated by the SCF(FBXO31) protein ligase complex. SCF(FBXO31) ubiquitination is dependent on Thr-286 phosphorylation. Ubiquitinated also by UHRF2 apparently in a phosphorylation-independent manner. Ubiquitination leads to its degradation and G1 arrest. Deubiquitinated by USP2; leading to its stabilization. Expressed in the intestinal epithelium.

The protein localises to the nucleus. Its subcellular location is the cytoplasm. It is found in the nucleus membrane. Functionally, regulatory component of the cyclin D1-CDK4 (DC) complex that phosphorylates and inhibits members of the retinoblastoma (RB) protein family including RB1 and regulates the cell-cycle during G(1)/S transition. Phosphorylation of RB1 allows dissociation of the transcription factor E2F from the RB/E2F complex and the subsequent transcription of E2F target genes which are responsible for the progression through the G(1) phase. Hypophosphorylates RB1 in early G(1) phase. Cyclin D-CDK4 complexes are major integrators of various mitogenenic and antimitogenic signals. Also a substrate for SMAD3, phosphorylating SMAD3 in a cell-cycle-dependent manner and repressing its transcriptional activity. Component of the ternary complex, cyclin D1/CDK4/CDKN1B, required for nuclear translocation and activity of the cyclin D-CDK4 complex. Exhibits transcriptional corepressor activity with INSM1 on the NEUROD1 and INS promoters in a cell cycle-independent manner. This Mus musculus (Mouse) protein is G1/S-specific cyclin-D1 (Ccnd1).